Reading from the N-terminus, the 199-residue chain is Holliday junction branch migration complex subunit RuvA (199 aa).

The segment at 1-63 (MIASVRGEVL…EDSMTLYGFS (63 aa)) is domain I. The tract at residues 64-141 (DTESKDLFSL…DAVATTAGAA (78 aa)) is domain II. Residues 141–145 (ASGAV) are flexible linker. Residues 146-199 (VGSSIRDQIVEALEGLGFPIKQAEQATDSVLAESPEATTSVALRSALSLLGKTR) are domain III.

Belongs to the RuvA family. As to quaternary structure, homotetramer. Forms an RuvA(8)-RuvB(12)-Holliday junction (HJ) complex. HJ DNA is sandwiched between 2 RuvA tetramers; dsDNA enters through RuvA and exits via RuvB. An RuvB hexamer assembles on each DNA strand where it exits the tetramer. Each RuvB hexamer is contacted by two RuvA subunits (via domain III) on 2 adjacent RuvB subunits; this complex drives branch migration. In the full resolvosome a probable DNA-RuvA(4)-RuvB(12)-RuvC(2) complex forms which resolves the HJ.

The protein localises to the cytoplasm. Functionally, the RuvA-RuvB-RuvC complex processes Holliday junction (HJ) DNA during genetic recombination and DNA repair, while the RuvA-RuvB complex plays an important role in the rescue of blocked DNA replication forks via replication fork reversal (RFR). RuvA specifically binds to HJ cruciform DNA, conferring on it an open structure. The RuvB hexamer acts as an ATP-dependent pump, pulling dsDNA into and through the RuvAB complex. HJ branch migration allows RuvC to scan DNA until it finds its consensus sequence, where it cleaves and resolves the cruciform DNA. In Rhodococcus erythropolis (strain PR4 / NBRC 100887), this protein is Holliday junction branch migration complex subunit RuvA.